We begin with the raw amino-acid sequence, 120 residues long: Flagellar protein FliT (120 aa).

The interval 1–50 (MNDFISSLNNWQALYALSNTMLSLANSGQWDELIEQEVKYVTLVEAIARN) is required for homodimerization. The segment at 59–97 (FQEKARELLTKVLANEAALKIKLQARMEELRVLIEQNGN) is fliD binding.

The protein belongs to the FliT family. In terms of assembly, homodimer. Interacts with FliD and FlhC.

It is found in the cytoplasm. It localises to the cytosol. Functionally, dual-function protein that regulates the transcription of class 2 flagellar operons and that also acts as an export chaperone for the filament-capping protein FliD. As a transcriptional regulator, acts as an anti-FlhDC factor; it directly binds FlhC, thus inhibiting the binding of the FlhC/FlhD complex to class 2 promoters, resulting in decreased expression of class 2 flagellar operons. As a chaperone, effects FliD transition to the membrane by preventing its premature polymerization, and by directing it to the export apparatus. The chain is Flagellar protein FliT from Cronobacter sakazakii (strain ATCC BAA-894) (Enterobacter sakazakii).